Consider the following 394-residue polypeptide: Phosphopentomutase (394 aa).

Residues D10, D282, H287, D323, H324, and H335 each coordinate Mn(2+).

It belongs to the phosphopentomutase family. Mn(2+) serves as cofactor.

The protein localises to the cytoplasm. It carries out the reaction 2-deoxy-alpha-D-ribose 1-phosphate = 2-deoxy-D-ribose 5-phosphate. The enzyme catalyses alpha-D-ribose 1-phosphate = D-ribose 5-phosphate. The protein operates within carbohydrate degradation; 2-deoxy-D-ribose 1-phosphate degradation; D-glyceraldehyde 3-phosphate and acetaldehyde from 2-deoxy-alpha-D-ribose 1-phosphate: step 1/2. Its function is as follows. Isomerase that catalyzes the conversion of deoxy-ribose 1-phosphate (dRib-1-P) and ribose 1-phosphate (Rib-1-P) to deoxy-ribose 5-phosphate (dRib-5-P) and ribose 5-phosphate (Rib-5-P), respectively. This chain is Phosphopentomutase, found in Dictyoglomus turgidum (strain DSM 6724 / Z-1310).